We begin with the raw amino-acid sequence, 542 residues long: Putative beta-glucosidase 23 (542 aa).

The signal sequence occupies residues 1 to 29 (MAACTSSLVSLLLLLLLLLLLLVAGEATA). N34 carries an N-linked (GlcNAc...) asparagine glycan. Q88 serves as a coordination point for a beta-D-glucoside. The N-linked (GlcNAc...) asparagine glycan is linked to N135. Position 216 (H216) interacts with a beta-D-glucoside. Residue E262 is the Proton donor of the active site. C281 and C289 are oxidised to a cystine. Residue Y405 participates in a beta-D-glucoside binding. N445 carries N-linked (GlcNAc...) asparagine glycosylation. A beta-D-glucoside is bound by residues W476 and F492.

It belongs to the glycosyl hydrolase 1 family.

The catalysed reaction is Hydrolysis of terminal, non-reducing beta-D-glucosyl residues with release of beta-D-glucose.. This chain is Putative beta-glucosidase 23 (BGLU23), found in Oryza sativa subsp. japonica (Rice).